A 347-amino-acid chain; its full sequence is N-acetyl-gamma-glutamyl-phosphate reductase (347 aa).

Cys-150 is a catalytic residue.

This sequence belongs to the NAGSA dehydrogenase family. Type 1 subfamily.

Its subcellular location is the cytoplasm. It carries out the reaction N-acetyl-L-glutamate 5-semialdehyde + phosphate + NADP(+) = N-acetyl-L-glutamyl 5-phosphate + NADPH + H(+). It functions in the pathway amino-acid biosynthesis; L-arginine biosynthesis; N(2)-acetyl-L-ornithine from L-glutamate: step 3/4. In terms of biological role, catalyzes the NADPH-dependent reduction of N-acetyl-5-glutamyl phosphate to yield N-acetyl-L-glutamate 5-semialdehyde. The chain is N-acetyl-gamma-glutamyl-phosphate reductase from Halothermothrix orenii (strain H 168 / OCM 544 / DSM 9562).